The chain runs to 201 residues: Recombination protein RecR (201 aa).

The segment at 60-75 (CSVCGNVDTIDPCSIC) adopts a C4-type zinc-finger fold. In terms of domain architecture, Toprim spans 83–178 (ATIIVVEDIA…KVTRLAHGVP (96 aa)).

It belongs to the RecR family.

Its function is as follows. May play a role in DNA repair. It seems to be involved in an RecBC-independent recombinational process of DNA repair. It may act with RecF and RecO. The protein is Recombination protein RecR of Bartonella henselae (strain ATCC 49882 / DSM 28221 / CCUG 30454 / Houston 1) (Rochalimaea henselae).